The chain runs to 123 residues: Large ribosomal subunit protein bL19 (123 aa).

The protein belongs to the bacterial ribosomal protein bL19 family.

Functionally, this protein is located at the 30S-50S ribosomal subunit interface and may play a role in the structure and function of the aminoacyl-tRNA binding site. The sequence is that of Large ribosomal subunit protein bL19 (rplS) from Treponema pallidum (strain Nichols).